The primary structure comprises 270 residues: Glutamate racemase (270 aa).

Substrate-binding positions include 10–11 and 42–43; these read DS and YG. The active-site Proton donor/acceptor is C73. Residue 74–75 participates in substrate binding; the sequence is NT. C184 acts as the Proton donor/acceptor in catalysis. Substrate is bound at residue 185-186; the sequence is TH.

The protein belongs to the aspartate/glutamate racemases family.

It catalyses the reaction L-glutamate = D-glutamate. It functions in the pathway cell wall biogenesis; peptidoglycan biosynthesis. Functionally, provides the (R)-glutamate required for cell wall biosynthesis. In Geobacter metallireducens (strain ATCC 53774 / DSM 7210 / GS-15), this protein is Glutamate racemase.